The sequence spans 268 residues: Tetraspanin-33 (268 aa).

Residues Met-1–Tyr-23 are Cytoplasmic-facing. The chain crosses the membrane as a helical span at residues Leu-24–Val-44. The Extracellular segment spans residues Tyr-45–Pro-63. A helical transmembrane segment spans residues Ala-64–Gly-84. Over Ser-85–Thr-95 the chain is Cytoplasmic. The chain crosses the membrane as a helical span at residues Phe-96–Ile-116. The Extracellular portion of the chain corresponds to Phe-117 to Arg-226. 4 cysteine pairs are disulfide-bonded: Cys-155-Cys-223, Cys-156-Cys-188, Cys-172-Cys-182, and Cys-189-Cys-202. Residues Asn-171 and Asn-176 are each glycosylated (N-linked (GlcNAc...) asparagine). A helical membrane pass occupies residues Leu-227–Ile-247. Over Pro-248–Val-268 the chain is Cytoplasmic.

This sequence belongs to the tetraspanin (TM4SF) family. In terms of assembly, homodimer; disulfide-linked.

Its subcellular location is the cell membrane. The protein resides in the cell junction. The protein localises to the adherens junction. It localises to the cytoplasm. In terms of biological role, part of TspanC8 subgroup, composed of 6 members that interact with the transmembrane metalloprotease ADAM10. This interaction is required for ADAM10 exit from the endoplasmic reticulum and for enzymatic maturation and trafficking to the cell surface as well as substrate specificity. Different TspanC8/ADAM10 complexes have distinct substrates. The polypeptide is Tetraspanin-33 (tspan33) (Xenopus laevis (African clawed frog)).